A 258-amino-acid chain; its full sequence is MAAGVPKIDALESLGNPLEDAKRAAAYRAVDENLKFDDHKIIGIGSGSTVVYVAERIGQYLHDPKFYEVASKFICIPTGFQSRNLILDNKLQLGSIEQYPRIDIAFDGADEVDENLQLIKGGGACLFQEKLVSTSAKTFIVVADSRKKSPKHLGKNWRQGVPIEIVPSSYVRVKNDLLEQLHAEKVDIRQGGSAKAGPVVTDNNNFIIDADFGEISDPRKLHREIKLLVGVVETGLFIDNASKAYFGNSDGSVEVTEK.

This sequence belongs to the ribose 5-phosphate isomerase family.

Its subcellular location is the cytoplasm. It catalyses the reaction aldehydo-D-ribose 5-phosphate = D-ribulose 5-phosphate. It functions in the pathway carbohydrate degradation; pentose phosphate pathway; D-ribose 5-phosphate from D-ribulose 5-phosphate (non-oxidative stage): step 1/1. This is Ribose-5-phosphate isomerase (RKI1) from Saccharomyces cerevisiae (strain YJM789) (Baker's yeast).